The following is a 680-amino-acid chain: tRNA 5-methylaminomethyl-2-thiouridine biosynthesis bifunctional protein MnmC (680 aa).

Residues 1-267 are tRNA (mnm(5)s(2)U34)-methyltransferase; sequence MTAEPNKPCQ…MAAILSSDAP (267 aa). Residues 273 to 680 form an FAD-dependent cmnm(5)s(2)U34 oxidoreductase region; that stretch reads IGGGLASAHL…LRKLLKGKAL (408 aa).

It in the N-terminal section; belongs to the methyltransferase superfamily. tRNA (mnm(5)s(2)U34)-methyltransferase family. This sequence in the C-terminal section; belongs to the DAO family. It depends on FAD as a cofactor.

It localises to the cytoplasm. The enzyme catalyses 5-aminomethyl-2-thiouridine(34) in tRNA + S-adenosyl-L-methionine = 5-methylaminomethyl-2-thiouridine(34) in tRNA + S-adenosyl-L-homocysteine + H(+). Functionally, catalyzes the last two steps in the biosynthesis of 5-methylaminomethyl-2-thiouridine (mnm(5)s(2)U) at the wobble position (U34) in tRNA. Catalyzes the FAD-dependent demodification of cmnm(5)s(2)U34 to nm(5)s(2)U34, followed by the transfer of a methyl group from S-adenosyl-L-methionine to nm(5)s(2)U34, to form mnm(5)s(2)U34. The chain is tRNA 5-methylaminomethyl-2-thiouridine biosynthesis bifunctional protein MnmC from Shewanella putrefaciens (strain CN-32 / ATCC BAA-453).